A 412-amino-acid polypeptide reads, in one-letter code: Short-chain specific acyl-CoA dehydrogenase, mitochondrial (412 aa).

The transit peptide at Met1–Arg24 directs the protein to the mitochondrion. A Phosphothreonine modification is found at Thr27. Residue Lys51 is modified to N6-acetyllysine; alternate. Lys51 is subject to N6-succinyllysine; alternate. Lys72 carries the post-translational modification N6-acetyllysine. Lys129 is modified (N6-acetyllysine; alternate). Lys129 is subject to N6-succinyllysine; alternate. Residues Phe152–Ser161 and Trp185–Thr187 each bind FAD. Ser161 provides a ligand contact to substrate. The residue at position 208 (Lys208) is an N6-acetyllysine. N6-acetyllysine; alternate is present on Lys262. At Lys262 the chain carries N6-succinyllysine; alternate. Position 269–272 (Asp269–Arg272) interacts with substrate. An FAD-binding site is contributed by Arg297. Residue Lys306 is modified to N6-acetyllysine; alternate. Lys306 carries the N6-succinyllysine; alternate modification. FAD contacts are provided by residues Gln308 and Gln365–Gly369. Glu392 serves as the catalytic Proton acceptor. Gly393 contributes to the substrate binding site. Thr394–Glu396 is a binding site for FAD.

It belongs to the acyl-CoA dehydrogenase family. In terms of assembly, homotetramer. FAD is required as a cofactor.

It localises to the mitochondrion matrix. It catalyses the reaction a short-chain 2,3-saturated fatty acyl-CoA + oxidized [electron-transfer flavoprotein] + H(+) = a short-chain (2E)-enoyl-CoA + reduced [electron-transfer flavoprotein]. The enzyme catalyses butanoyl-CoA + oxidized [electron-transfer flavoprotein] + H(+) = (2E)-butenoyl-CoA + reduced [electron-transfer flavoprotein]. The catalysed reaction is pentanoyl-CoA + oxidized [electron-transfer flavoprotein] + H(+) = (2E)-pentenoyl-CoA + reduced [electron-transfer flavoprotein]. It carries out the reaction hexanoyl-CoA + oxidized [electron-transfer flavoprotein] + H(+) = (2E)-hexenoyl-CoA + reduced [electron-transfer flavoprotein]. It functions in the pathway lipid metabolism; mitochondrial fatty acid beta-oxidation. Its function is as follows. Short-chain specific acyl-CoA dehydrogenase is one of the acyl-CoA dehydrogenases that catalyze the first step of mitochondrial fatty acid beta-oxidation, an aerobic process breaking down fatty acids into acetyl-CoA and allowing the production of energy from fats. The first step of fatty acid beta-oxidation consists in the removal of one hydrogen from C-2 and C-3 of the straight-chain fatty acyl-CoA thioester, resulting in the formation of trans-2-enoyl-CoA. Among the different mitochondrial acyl-CoA dehydrogenases, short-chain specific acyl-CoA dehydrogenase acts specifically on acyl-CoAs with saturated 4 to 6 carbons long primary chains. In Bos taurus (Bovine), this protein is Short-chain specific acyl-CoA dehydrogenase, mitochondrial (ACADS).